Here is a 205-residue protein sequence, read N- to C-terminus: MQQIVLASGNKGKLAEFDQMLAAYGVKVLPQSQFNVSEVAETGTTFVENAIIKARHAAQITGHAAIADDSGLEVDLLQGVPGIYSARYAGENAKDQDNVLKLLDTLKDYPAPRTARFQCVLVYMRHAKDPTPIICQASWEGQIDFVQRGDNGHGYDPIFIPEHHDCSAAQMSSDEKNTLSHRGKALVQLITAMQEKGVFTDRNAQ.

8–13 (SGNKGK) provides a ligand contact to substrate. D69 acts as the Proton acceptor in catalysis. Residue D69 participates in Mg(2+) binding. Residues S70, 153–156 (HGYD), K176, and 181–182 (HR) contribute to the substrate site.

Belongs to the HAM1 NTPase family. Homodimer. It depends on Mg(2+) as a cofactor.

It carries out the reaction XTP + H2O = XMP + diphosphate + H(+). The catalysed reaction is dITP + H2O = dIMP + diphosphate + H(+). It catalyses the reaction ITP + H2O = IMP + diphosphate + H(+). Functionally, pyrophosphatase that catalyzes the hydrolysis of nucleoside triphosphates to their monophosphate derivatives, with a high preference for the non-canonical purine nucleotides XTP (xanthosine triphosphate), dITP (deoxyinosine triphosphate) and ITP. Seems to function as a house-cleaning enzyme that removes non-canonical purine nucleotides from the nucleotide pool, thus preventing their incorporation into DNA/RNA and avoiding chromosomal lesions. The protein is dITP/XTP pyrophosphatase of Shewanella oneidensis (strain ATCC 700550 / JCM 31522 / CIP 106686 / LMG 19005 / NCIMB 14063 / MR-1).